The chain runs to 261 residues: Triosephosphate isomerase (261 aa).

Residue 10-12 (NWK) coordinates substrate. His100 (electrophile) is an active-site residue. Glu172 serves as the catalytic Proton acceptor. Residues Gly178, Ser218, and 239-240 (GG) each bind substrate.

The protein belongs to the triosephosphate isomerase family. As to quaternary structure, homodimer.

It localises to the cytoplasm. It carries out the reaction D-glyceraldehyde 3-phosphate = dihydroxyacetone phosphate. The protein operates within carbohydrate biosynthesis; gluconeogenesis. It functions in the pathway carbohydrate degradation; glycolysis; D-glyceraldehyde 3-phosphate from glycerone phosphate: step 1/1. In terms of biological role, involved in the gluconeogenesis. Catalyzes stereospecifically the conversion of dihydroxyacetone phosphate (DHAP) to D-glyceraldehyde-3-phosphate (G3P). The polypeptide is Triosephosphate isomerase (Mycobacteroides abscessus (strain ATCC 19977 / DSM 44196 / CCUG 20993 / CIP 104536 / JCM 13569 / NCTC 13031 / TMC 1543 / L948) (Mycobacterium abscessus)).